Consider the following 759-residue polypeptide: uncharacterized protein (759 aa).

2 disordered regions span residues 269–328 (SQRV…GEEP) and 406–759 (LPLR…AQTA). Basic and acidic residues predominate over residues 289–299 (AGGKEEAERGG). Residues 406 to 415 (LPLRPPSGSG) show a composition bias toward low complexity. Residues 417-430 (AARKPGYEKEEGRG) are compositionally biased toward basic and acidic residues. Positions 431-444 (RATTASATAATSPR) are enriched in low complexity. Basic and acidic residues-rich tracts occupy residues 469–518 (PESE…RGEH) and 525–545 (DSGR…EKGT). Over residues 585–599 (WVPPPHLLFPSPLPS) the composition is skewed to pro residues. Residues 659-680 (SLSSLSSSSSSSSSSSPSYSPS) show a composition bias toward low complexity. Residues 681–690 (PLSPPSPVSP) are compositionally biased toward pro residues. Low complexity-rich tracts occupy residues 691-704 (SSPR…IRSP) and 728-746 (PPFS…PSAP).

This is an uncharacterized protein from Human herpesvirus 6B (strain Z29) (HHV-6 variant B).